The following is a 156-amino-acid chain: S-ribosylhomocysteine lyase (156 aa).

Fe cation is bound by residues His54, His58, and Cys126.

This sequence belongs to the LuxS family. As to quaternary structure, homodimer. Requires Fe cation as cofactor.

It catalyses the reaction S-(5-deoxy-D-ribos-5-yl)-L-homocysteine = (S)-4,5-dihydroxypentane-2,3-dione + L-homocysteine. Involved in the synthesis of autoinducer 2 (AI-2) which is secreted by bacteria and is used to communicate both the cell density and the metabolic potential of the environment. The regulation of gene expression in response to changes in cell density is called quorum sensing. Catalyzes the transformation of S-ribosylhomocysteine (RHC) to homocysteine (HC) and 4,5-dihydroxy-2,3-pentadione (DPD). The polypeptide is S-ribosylhomocysteine lyase (Shouchella clausii (strain KSM-K16) (Alkalihalobacillus clausii)).